Consider the following 70-residue polypeptide: Exodeoxyribonuclease 7 small subunit (70 aa).

Belongs to the XseB family. As to quaternary structure, heterooligomer composed of large and small subunits.

The protein resides in the cytoplasm. It catalyses the reaction Exonucleolytic cleavage in either 5'- to 3'- or 3'- to 5'-direction to yield nucleoside 5'-phosphates.. Bidirectionally degrades single-stranded DNA into large acid-insoluble oligonucleotides, which are then degraded further into small acid-soluble oligonucleotides. This is Exodeoxyribonuclease 7 small subunit from Streptococcus sanguinis (strain SK36).